A 436-amino-acid chain; its full sequence is Trigger factor (436 aa).

In terms of domain architecture, PPIase FKBP-type spans 163 to 248; sequence GDRVVLDFAG…VKEVAEGVLP (86 aa).

The protein belongs to the FKBP-type PPIase family. Tig subfamily.

The protein resides in the cytoplasm. The enzyme catalyses [protein]-peptidylproline (omega=180) = [protein]-peptidylproline (omega=0). Involved in protein export. Acts as a chaperone by maintaining the newly synthesized protein in an open conformation. Functions as a peptidyl-prolyl cis-trans isomerase. The sequence is that of Trigger factor from Bordetella bronchiseptica (strain ATCC BAA-588 / NCTC 13252 / RB50) (Alcaligenes bronchisepticus).